The sequence spans 154 residues: tRNA (cytidine(34)-2'-O)-methyltransferase (154 aa).

S-adenosyl-L-methionine-binding residues include leucine 78, glycine 100, isoleucine 122, and serine 130.

The protein belongs to the class IV-like SAM-binding methyltransferase superfamily. RNA methyltransferase TrmH family. TrmL subfamily. As to quaternary structure, homodimer.

It localises to the cytoplasm. The enzyme catalyses cytidine(34) in tRNA + S-adenosyl-L-methionine = 2'-O-methylcytidine(34) in tRNA + S-adenosyl-L-homocysteine + H(+). It catalyses the reaction 5-carboxymethylaminomethyluridine(34) in tRNA(Leu) + S-adenosyl-L-methionine = 5-carboxymethylaminomethyl-2'-O-methyluridine(34) in tRNA(Leu) + S-adenosyl-L-homocysteine + H(+). Its function is as follows. Methylates the ribose at the nucleotide 34 wobble position in the two leucyl isoacceptors tRNA(Leu)(CmAA) and tRNA(Leu)(cmnm5UmAA). Catalyzes the methyl transfer from S-adenosyl-L-methionine to the 2'-OH of the wobble nucleotide. This Saccharophagus degradans (strain 2-40 / ATCC 43961 / DSM 17024) protein is tRNA (cytidine(34)-2'-O)-methyltransferase.